We begin with the raw amino-acid sequence, 100 residues long: Movement protein TGBp3 (100 aa).

Over Met-1–Asp-41 the chain is Lumenal. The helical transmembrane segment at Leu-42–Pro-59 threads the bilayer. Residues Lys-60–Leu-100 lie on the Cytoplasmic side of the membrane.

This sequence belongs to the Tymovirales TGBp3 protein family.

It localises to the host endoplasmic reticulum membrane. In terms of biological role, plays a role in viral cell-to-cell propagation, by facilitating genome transport to neighboring plant cells through plasmosdesmata. May induce the formation of granular vesicles derived from the Endoplasmic reticulum, which align on actin filaments. This Narcissus mosaic virus (NMV) protein is Movement protein TGBp3.